The sequence spans 201 residues: Recombination protein RecR (201 aa).

A C4-type zinc finger spans residues 60 to 75 (CSRCGNVDTVDPCTVC). A Toprim domain is found at 83–178 (SVIIVVEDVA…KITRLAHGVP (96 aa)).

It belongs to the RecR family.

Functionally, may play a role in DNA repair. It seems to be involved in an RecBC-independent recombinational process of DNA repair. It may act with RecF and RecO. This is Recombination protein RecR from Rhizobium rhizogenes (strain K84 / ATCC BAA-868) (Agrobacterium radiobacter).